Here is a 105-residue protein sequence, read N- to C-terminus: Insulin-like peptide 7 (105 aa).

The first 18 residues, 1–18 (MPPIILVFFLVLIPASQQ), serve as a signal peptide directing secretion. A propeptide spanning residues 19–57 (YPFSLESLNDQIINEEVIEYMLENSIRSSRTRRVPDEKK) is cleaved from the precursor. Disulfide bonds link cysteine 61/cysteine 90, cysteine 73/cysteine 103, cysteine 77/cysteine 104, and cysteine 89/cysteine 94.

Belongs to the insulin family.

It is found in the secreted. Functionally, insulin-like peptide which plays a role in ageing as a consequence of daf-16 activity. The sequence is that of Insulin-like peptide 7 from Caenorhabditis elegans.